Reading from the N-terminus, the 72-residue chain is Candidate secreted effector protein MPL124499 (72 aa).

The N-terminal stretch at 1-21 (MKLSIFAAIFMAFVSLNQVFG) is a signal peptide.

The protein belongs to the CPGH1 family.

The protein localises to the secreted. It is found in the host cell. Its subcellular location is the host cytoplasm. It localises to the host nucleus. Rust effector delivered into infected tissues to modulate host functions and contribute to pathogen virulence. Enhances leaf colonization by the bacteria Pseudomonas syringae and the oomycete Hyaloperonospora arabidopsidis pathogens in an Arabidopsis thaliana infection model. This chain is Candidate secreted effector protein MPL124499, found in Melampsora larici-populina (strain 98AG31 / pathotype 3-4-7) (Poplar leaf rust fungus).